The following is a 365-amino-acid chain: Ferrochelatase (365 aa).

Fe cation contacts are provided by His-211 and Glu-292.

Belongs to the ferrochelatase family.

It is found in the cytoplasm. The catalysed reaction is heme b + 2 H(+) = protoporphyrin IX + Fe(2+). It participates in porphyrin-containing compound metabolism; protoheme biosynthesis; protoheme from protoporphyrin-IX: step 1/1. Its function is as follows. Catalyzes the ferrous insertion into protoporphyrin IX. The sequence is that of Ferrochelatase from Aromatoleum aromaticum (strain DSM 19018 / LMG 30748 / EbN1) (Azoarcus sp. (strain EbN1)).